We begin with the raw amino-acid sequence, 58 residues long: Large ribosomal subunit protein bL32 (58 aa).

Positions 1–20 are enriched in basic residues; sequence MALPKHKKSKSKRDKRRTHQ. Residues 1 to 26 are disordered; the sequence is MALPKHKKSKSKRDKRRTHQKLTAPN.

Belongs to the bacterial ribosomal protein bL32 family.

This is Large ribosomal subunit protein bL32 from Desulfatibacillum aliphaticivorans.